A 1703-amino-acid polypeptide reads, in one-letter code: Ferlin 2 (1703 aa).

C2 domains lie at 18–141 (IRKL…KTWL) and 207–332 (KQPV…FRWF). Disordered stretches follow at residues 913–937 (NQFN…FDDN), 970–1025 (NLDK…TSST), and 1194–1228 (KNKS…QKLG). Residues 916–928 (NDDDEGDNEDEQD) are compositionally biased toward acidic residues. The span at 979–991 (QPQSLKNLQNLDS) shows a compositional bias: polar residues. A compositionally biased stretch (basic and acidic residues) spans 993–1009 (SKADQKSQFDLKSESKS). Over residues 1198–1209 (NRSSMSLSMRSS) the composition is skewed to low complexity. The 130-residue stretch at 1466–1595 (VARIIPPSTI…LKKLKEGIVF (130 aa)) folds into the C2 3 domain. The segment at 1628 to 1651 (AAESDPVGEGQNEPNKDPILEKPK) is disordered. The segment covering 1641-1651 (PNKDPILEKPK) has biased composition (basic and acidic residues). A helical transmembrane segment spans residues 1681–1701 (FAGIFVSIVTMMILFVKPGIL).

Belongs to the ferlin family.

It localises to the membrane. In terms of biological role, regulates mucocyst exocytosis. In Tetrahymena thermophila (strain SB210), this protein is Ferlin 2.